The following is a 302-amino-acid chain: NAD kinase 2 (302 aa).

The active-site Proton acceptor is the aspartate 78. NAD(+) contacts are provided by residues 78–79 (DG), 152–153 (NE), aspartate 182, and 193–198 (TAYSLS).

The protein belongs to the NAD kinase family. A divalent metal cation serves as cofactor.

It localises to the cytoplasm. It catalyses the reaction NAD(+) + ATP = ADP + NADP(+) + H(+). Functionally, involved in the regulation of the intracellular balance of NAD and NADP, and is a key enzyme in the biosynthesis of NADP. Catalyzes specifically the phosphorylation on 2'-hydroxyl of the adenosine moiety of NAD to yield NADP. The chain is NAD kinase 2 from Prochlorococcus marinus (strain NATL2A).